We begin with the raw amino-acid sequence, 266 residues long: Protein PAE0875 (266 aa).

This sequence belongs to the CinA family.

This Pyrobaculum aerophilum (strain ATCC 51768 / DSM 7523 / JCM 9630 / CIP 104966 / NBRC 100827 / IM2) protein is Protein PAE0875.